The primary structure comprises 263 residues: Benzil reductase ((S)-benzoin forming) IRC24 (263 aa).

Residues Ile7 and Asn86 each contribute to the NADP(+) site. Ser143 functions as the Proton donor in the catalytic mechanism. NADP(+) is bound by residues Tyr157, Lys161, Val190, and Thr192. The active-site Proton acceptor is the Tyr157. The active-site Lowers pKa of active site Tyr is the Lys161.

Belongs to the short-chain dehydrogenases/reductases (SDR) family.

It catalyses the reaction (S)-benzoin + NADP(+) = benzil + NADPH + H(+). It carries out the reaction 2-hydroxy-1-phenyl-1-propanone + NADP(+) = 1-phenyl-1,2-propanedione + NADPH + H(+). Functionally, reduces benzil stereospecifically to (S)-benzoin. Also reduces 1-phenyl-1,2-propanedione to 2-hydroxy-1-phenyl-1-propanone. Is probably involved in a pathway contributing to genomic integrity. This Saccharomyces cerevisiae (strain ATCC 204508 / S288c) (Baker's yeast) protein is Benzil reductase ((S)-benzoin forming) IRC24 (IRC24).